The chain runs to 313 residues: Solute carrier family 25 member 36 (313 aa).

3 Solcar repeats span residues 4-110, 118-205, and 226-310; these read RDTL…CKEK, DSTQ…IKRK, and SDFV…VVYL. 6 helical membrane-spanning segments follow: residues 7–27, 41–57, 113–133, 182–202, 228–248, and 293–313; these read LVHL…TCPL, LYIS…ASVN, NIFN…AGFT, MSAS…YESI, FVGM…IAYP, and QIPN…LLDG.

The protein belongs to the mitochondrial carrier (TC 2.A.29) family.

Its subcellular location is the mitochondrion inner membrane. Its function is as follows. Mitochondrial transporter that imports/exports pyrimidine nucleotides into and from mitochondria. Transports preferentially cytosine and uracil (deoxy)nucleoside mono-, di-, and triphosphates by uniport and antiport mechanism. The protein is Solute carrier family 25 member 36 (SLC25A36) of Gallus gallus (Chicken).